Here is a 283-residue protein sequence, read N- to C-terminus: Daunorubicin resistance ABC transporter permease protein DrrB1 (283 aa).

One can recognise an ABC transmembrane type-2 domain in the interval 53-280; sequence VQLIDIVLMP…PLTMRLYRNK (228 aa). 6 helical membrane passes run 58–78, 85–105, 150–170, 171–191, 198–218, and 252–272; these read IVLMPLIFLLMFTYLFGGAFA, LQFYLPGVTVQAVVMMTVYTG, VFLGLLLGFRADGGFLGVVGA, MLVLIVFGFSVSWIFAALGVV, VSGTSMIVLYPLLFMSNIFVM, and FWDVGLVLCVSAGLVAVFAPL.

It belongs to the ABC-2 integral membrane protein family. In terms of assembly, the complex is probably composed of two ATP-binding proteins (DrrA1) and two transmembrane proteins (DrrB1).

It localises to the cell membrane. Part of the ABC transporter complex DrrA1B1 involved in daunorubicin efflux. Responsible for the translocation of the substrate across the membrane. Confers self-resistance to daunorubicin, an antibiotic produced by S.coeruleorubidus. The sequence is that of Daunorubicin resistance ABC transporter permease protein DrrB1 from Streptomyces coeruleorubidus.